The primary structure comprises 485 residues: UDP-N-acetylmuramoyl-L-alanyl-D-glutamate--2,6-diaminopimelate ligase (485 aa).

Ser-32 lines the UDP-N-acetyl-alpha-D-muramoyl-L-alanyl-D-glutamate pocket. 111–117 (GTNGKTT) serves as a coordination point for ATP. Residues 153-154 (TT), Ser-180, and Arg-188 contribute to the UDP-N-acetyl-alpha-D-muramoyl-L-alanyl-D-glutamate site. Lys-220 carries the post-translational modification N6-carboxylysine. Meso-2,6-diaminopimelate contacts are provided by residues Arg-382, 405-408 (DNPR), Gly-455, and Glu-459. The short motif at 405-408 (DNPR) is the Meso-diaminopimelate recognition motif element.

Belongs to the MurCDEF family. MurE subfamily. Requires Mg(2+) as cofactor. Carboxylation is probably crucial for Mg(2+) binding and, consequently, for the gamma-phosphate positioning of ATP.

It is found in the cytoplasm. The catalysed reaction is UDP-N-acetyl-alpha-D-muramoyl-L-alanyl-D-glutamate + meso-2,6-diaminopimelate + ATP = UDP-N-acetyl-alpha-D-muramoyl-L-alanyl-gamma-D-glutamyl-meso-2,6-diaminopimelate + ADP + phosphate + H(+). Its pathway is cell wall biogenesis; peptidoglycan biosynthesis. In terms of biological role, catalyzes the addition of meso-diaminopimelic acid to the nucleotide precursor UDP-N-acetylmuramoyl-L-alanyl-D-glutamate (UMAG) in the biosynthesis of bacterial cell-wall peptidoglycan. The sequence is that of UDP-N-acetylmuramoyl-L-alanyl-D-glutamate--2,6-diaminopimelate ligase from Chlamydia felis (strain Fe/C-56) (Chlamydophila felis).